We begin with the raw amino-acid sequence, 597 residues long: DNA polymerase III subunit gamma/tau (597 aa).

44–51 (GERGTGKT) lines the ATP pocket. Positions 63, 72, 75, and 78 each coordinate Zn(2+).

Belongs to the DnaX/STICHEL family. DNA polymerase III contains a core (composed of alpha, epsilon and theta chains) that associates with a tau subunit. This core dimerizes to form the POLIII' complex. PolIII' associates with the gamma complex (composed of gamma, delta, delta', psi and chi chains) and with the beta chain to form the complete DNA polymerase III complex.

It catalyses the reaction DNA(n) + a 2'-deoxyribonucleoside 5'-triphosphate = DNA(n+1) + diphosphate. Functionally, DNA polymerase III is a complex, multichain enzyme responsible for most of the replicative synthesis in bacteria. This DNA polymerase also exhibits 3' to 5' exonuclease activity. This chain is DNA polymerase III subunit gamma/tau (dnaX), found in Mycoplasma genitalium (strain ATCC 33530 / DSM 19775 / NCTC 10195 / G37) (Mycoplasmoides genitalium).